A 641-amino-acid polypeptide reads, in one-letter code: Pumilio homolog 24 (641 aa).

Residues 1 to 82 (MSSKGLKPQK…LTEARKKKRK (82 aa)) are disordered. One can recognise a PUM-HD domain in the interval 9 to 404 (QKSTKRKDTD…RPLLQLLHPN (396 aa)). Composition is skewed to basic and acidic residues over residues 14-27 (RKDTDSSAKFDSLK) and 67-76 (RVQAKELTEA). Pumilio repeat units follow at residues 118–153 (KMKGKVPEIAVSHVSSRVLQTCVKFCSQAEKDVLFT), 154–189 (ELQPQFLNLASNKYAVHFIQKMLDGASKQQLAACIS), 190–225 (SLRGHVAPLLRHVFGSLVVEHAYHLGSAAQKQELLA), 303–340 (QLLTGSLLLRMVHTRDGSRLAMLSIKHGSAKERKKIIK), and 341–378 (AMKEHVKKMAFDQFGSMVLACIFSIVDDTKLVTKIIVR). The segment at 427-468 (MDKSETSSKTKDTDGNEIGEETKDEQEDTVAEHSDHEENVTA) is disordered. Positions 428–440 (DKSETSSKTKDTD) are enriched in basic and acidic residues. A compositionally biased stretch (acidic residues) spans 441–455 (GNEIGEETKDEQEDT). A compositionally biased stretch (basic and acidic residues) spans 456-468 (VAEHSDHEENVTA).

It localises to the nucleus. The protein resides in the nucleolus. Its function is as follows. Sequence-specific RNA-binding protein that regulates translation and mRNA stability by binding the 3'-UTR of target mRNAs. This chain is Pumilio homolog 24 (APUM24), found in Arabidopsis thaliana (Mouse-ear cress).